The chain runs to 326 residues: L-carnitine dehydrogenase (326 aa).

Gly-19 to Gly-24 is a binding site for NAD(+).

This sequence belongs to the 3-hydroxyacyl-CoA dehydrogenase family. L-carnitine dehydrogenase subfamily. Homodimer.

The protein resides in the cytoplasm. The enzyme catalyses carnitine + NAD(+) = 3-dehydrocarnitine + NADH + H(+). The protein operates within amine and polyamine metabolism; carnitine metabolism. In terms of biological role, catalyzes the NAD(+)-dependent oxidation of L-carnitine to 3-dehydrocarnitine. The polypeptide is L-carnitine dehydrogenase (Bacillus cereus (strain ZK / E33L)).